A 408-amino-acid chain; its full sequence is NADH-quinone oxidoreductase subunit H (408 aa).

9 helical membrane passes run leucine 18 to isoleucine 38, proline 84 to isoleucine 104, leucine 124 to leucine 144, valine 165 to threonine 185, threonine 198 to glutamate 218, serine 261 to isoleucine 281, tryptophan 288 to leucine 308, methionine 321 to isoleucine 341, and tryptophan 353 to alanine 373. The segment at valine 381–alanine 408 is disordered. The segment covering glutamine 382–proline 398 has biased composition (pro residues).

It belongs to the complex I subunit 1 family. NDH-1 is composed of 14 different subunits. Subunits NuoA, H, J, K, L, M, N constitute the membrane sector of the complex.

The protein resides in the cell membrane. It catalyses the reaction a quinone + NADH + 5 H(+)(in) = a quinol + NAD(+) + 4 H(+)(out). In terms of biological role, NDH-1 shuttles electrons from NADH, via FMN and iron-sulfur (Fe-S) centers, to quinones in the respiratory chain. The immediate electron acceptor for the enzyme in this species is believed to be menaquinone. Couples the redox reaction to proton translocation (for every two electrons transferred, four hydrogen ions are translocated across the cytoplasmic membrane), and thus conserves the redox energy in a proton gradient. This subunit may bind ubiquinone. The sequence is that of NADH-quinone oxidoreductase subunit H from Mycolicibacterium smegmatis (strain ATCC 700084 / mc(2)155) (Mycobacterium smegmatis).